Here is a 132-residue protein sequence, read N- to C-terminus: Small ribosomal subunit protein uS8 (132 aa).

The protein belongs to the universal ribosomal protein uS8 family. Part of the 30S ribosomal subunit. Contacts proteins S5 and S12.

In terms of biological role, one of the primary rRNA binding proteins, it binds directly to 16S rRNA central domain where it helps coordinate assembly of the platform of the 30S subunit. This Bradyrhizobium sp. (strain ORS 278) protein is Small ribosomal subunit protein uS8.